A 72-amino-acid chain; its full sequence is Hydrophobic protein OSR8 (72 aa).

2 consecutive transmembrane segments (helical) span residues 9-29 (FLEI…RFGC) and 39-59 (LLTI…LVAL).

Belongs to the UPF0057 (PMP3) family.

It is found in the membrane. This is Hydrophobic protein OSR8 (OSR8) from Oryza sativa subsp. japonica (Rice).